The sequence spans 138 residues: Nanos homolog 2 (138 aa).

The tract at residues 31 to 55 (ETQEIEEPSPGPPLGQDQGLGAPGA) is disordered. The Nanos-type zinc finger occupies 62–116 (LCNFCKHNGESRHVYSSHQLKTPDGVVVCPILRHYVCPVCGATGDQAHTLKYCPL). Zn(2+) contacts are provided by C63, C66, H79, C90, C98, C101, H109, and C114. Short sequence motifs (C2HC) lie at residues 63–90 (CNFC…VVVC) and 98–114 (CPVC…LKYC).

It belongs to the nanos family. Interacts with CNOT1, CNOT3, CNOT6L, CNOT7 and CNOT9. Testis and ovary. Expression found in several spermatogenic stages: in cells on the periphery of the tubules which could correspond to spermatogonia, in spermatocytes and in round spermatids (at protein level).

It localises to the cytoplasm. The protein localises to the P-body. Its subcellular location is the perinuclear region. Its function is as follows. Plays a key role in the sexual differentiation of germ cells by promoting the male fate but suppressing the female fate. Represses the female fate pathways by suppressing meiosis, which in turn results in the promotion of the male fate. Maintains the suppression of meiosis by preventing STRA8 expression, which is required for premeiotic DNA replication, after CYP26B1 is decreased. Regulates the localization of the CCR4-NOT deadenylation complex to P-bodies and plays a role in recruiting the complex to trigger the degradation of mRNAs involved in meiosis. Required for the maintenance of the spermatogonial stem cell population. Not essential for the assembly of P-bodies but is required for the maintenance of their normal state. The protein is Nanos homolog 2 (NANOS2) of Homo sapiens (Human).